A 206-amino-acid chain; its full sequence is Ribosomal RNA small subunit methyltransferase G (206 aa).

Residues glycine 74, leucine 79, 125-126 (VE), and arginine 140 each bind S-adenosyl-L-methionine.

It belongs to the methyltransferase superfamily. RNA methyltransferase RsmG family.

The protein resides in the cytoplasm. The catalysed reaction is guanosine(527) in 16S rRNA + S-adenosyl-L-methionine = N(7)-methylguanosine(527) in 16S rRNA + S-adenosyl-L-homocysteine. Specifically methylates the N7 position of guanine in position 527 of 16S rRNA. The protein is Ribosomal RNA small subunit methyltransferase G of Shewanella frigidimarina (strain NCIMB 400).